The following is a 246-amino-acid chain: 23S rRNA (guanosine-2'-O-)-methyltransferase RlmB (246 aa).

Glycine 198, isoleucine 218, and leucine 227 together coordinate S-adenosyl-L-methionine.

The protein belongs to the class IV-like SAM-binding methyltransferase superfamily. RNA methyltransferase TrmH family. RlmB subfamily.

The protein resides in the cytoplasm. The enzyme catalyses guanosine(2251) in 23S rRNA + S-adenosyl-L-methionine = 2'-O-methylguanosine(2251) in 23S rRNA + S-adenosyl-L-homocysteine + H(+). Functionally, specifically methylates the ribose of guanosine 2251 in 23S rRNA. This is 23S rRNA (guanosine-2'-O-)-methyltransferase RlmB from Shewanella oneidensis (strain ATCC 700550 / JCM 31522 / CIP 106686 / LMG 19005 / NCIMB 14063 / MR-1).